Here is a 225-residue protein sequence, read N- to C-terminus: Germin-like protein 8-6 (225 aa).

Positions 1–23 (MASPSSLCLLTALLALVSWQTIA) are cleaved as a signal peptide. Cysteine 33 and cysteine 48 are disulfide-bonded. A Cupin type-1 domain is found at 63–213 (AMLDTPRKTN…AFQVEKGTID (151 aa)). Asparagine 77 carries an N-linked (GlcNAc...) asparagine glycan. Mn(2+)-binding residues include histidine 110, histidine 112, and glutamate 117. An N-linked (GlcNAc...) asparagine glycan is attached at asparagine 136. Mn(2+) is bound at residue histidine 158.

It belongs to the germin family. As to quaternary structure, oligomer (believed to be a pentamer but probably hexamer).

It is found in the secreted. The protein resides in the extracellular space. It localises to the apoplast. Functionally, plays a role in broad-spectrum disease resistance. Probably has no oxalate oxidase activity even if the active site is conserved. The sequence is that of Germin-like protein 8-6 from Oryza sativa subsp. japonica (Rice).